A 180-amino-acid polypeptide reads, in one-letter code: Cancer/testis antigen 1 (180 aa).

2 stretches are compositionally biased toward gly residues: residues 1–47 (MQAE…GPRG) and 55–66 (GPGGGAPRGPHG). Residues 1–66 (MQAEGRGTGG…GGGAPRGPHG (66 aa)) are disordered.

It belongs to the CTAG/PCC1 family. In terms of tissue distribution, expressed in testis and ovary and in a wide variety of cancers. Detected in uterine myometrium. Expressed from 18 weeks until birth in human fetal testis. In the adult testis, is strongly expressed in spermatogonia and in primary spermatocytes, but not in post-meiotic cells or in testicular somatic cells (at protein level).

The protein resides in the cytoplasm. This is Cancer/testis antigen 1 (CTAG1A) from Homo sapiens (Human).